We begin with the raw amino-acid sequence, 269 residues long: Formamidopyrimidine-DNA glycosylase (269 aa).

P2 (schiff-base intermediate with DNA) is an active-site residue. Catalysis depends on E3, which acts as the Proton donor. The Proton donor; for beta-elimination activity role is filled by K57. DNA-binding residues include H90, R109, and K150. Residues 235-269 (QVYGREGEPCRVCGTPILAGKHAQRRTYWCRRCQK) form an FPG-type zinc finger. The Proton donor; for delta-elimination activity role is filled by R259.

The protein belongs to the FPG family. As to quaternary structure, monomer. Zn(2+) is required as a cofactor.

The catalysed reaction is Hydrolysis of DNA containing ring-opened 7-methylguanine residues, releasing 2,6-diamino-4-hydroxy-5-(N-methyl)formamidopyrimidine.. The enzyme catalyses 2'-deoxyribonucleotide-(2'-deoxyribose 5'-phosphate)-2'-deoxyribonucleotide-DNA = a 3'-end 2'-deoxyribonucleotide-(2,3-dehydro-2,3-deoxyribose 5'-phosphate)-DNA + a 5'-end 5'-phospho-2'-deoxyribonucleoside-DNA + H(+). Functionally, involved in base excision repair of DNA damaged by oxidation or by mutagenic agents. Acts as a DNA glycosylase that recognizes and removes damaged bases. Has a preference for oxidized purines, such as 7,8-dihydro-8-oxoguanine (8-oxoG). Has AP (apurinic/apyrimidinic) lyase activity and introduces nicks in the DNA strand. Cleaves the DNA backbone by beta-delta elimination to generate a single-strand break at the site of the removed base with both 3'- and 5'-phosphates. The protein is Formamidopyrimidine-DNA glycosylase of Cronobacter sakazakii (strain ATCC BAA-894) (Enterobacter sakazakii).